We begin with the raw amino-acid sequence, 217 residues long: N-(5'-phosphoribosyl)anthranilate isomerase (217 aa).

Belongs to the TrpF family.

It carries out the reaction N-(5-phospho-beta-D-ribosyl)anthranilate = 1-(2-carboxyphenylamino)-1-deoxy-D-ribulose 5-phosphate. It participates in amino-acid biosynthesis; L-tryptophan biosynthesis; L-tryptophan from chorismate: step 3/5. This Synechococcus elongatus (strain ATCC 33912 / PCC 7942 / FACHB-805) (Anacystis nidulans R2) protein is N-(5'-phosphoribosyl)anthranilate isomerase.